The primary structure comprises 573 residues: DNA ligase (573 aa).

Glutamate 250 provides a ligand contact to ATP. Lysine 252 functions as the N6-AMP-lysine intermediate in the catalytic mechanism. Positions 257, 272, 301, 342, 432, and 438 each coordinate ATP.

It belongs to the ATP-dependent DNA ligase family. It depends on Mg(2+) as a cofactor.

It catalyses the reaction ATP + (deoxyribonucleotide)n-3'-hydroxyl + 5'-phospho-(deoxyribonucleotide)m = (deoxyribonucleotide)n+m + AMP + diphosphate.. Functionally, DNA ligase that seals nicks in double-stranded DNA during DNA replication, DNA recombination and DNA repair. The protein is DNA ligase of Methanococcus maripaludis (strain C6 / ATCC BAA-1332).